The primary structure comprises 690 residues: Translation factor GUF1, mitochondrial (690 aa).

The interval 40-68 (SVTVPAARRHNSTKSTNSTTSTNSTTATS) is disordered. The segment covering 52–68 (TKSTNSTTSTNSTTATS) has biased composition (low complexity). Residues 89 to 272 (ERYRNFCIVA…AVIKKMPAPV (184 aa)) form the tr-type G domain. GTP contacts are provided by residues 98–105 (AHIDHGKS), 165–169 (DTPGH), and 219–222 (NKID).

It belongs to the TRAFAC class translation factor GTPase superfamily. Classic translation factor GTPase family. LepA subfamily.

It localises to the mitochondrion inner membrane. The catalysed reaction is GTP + H2O = GDP + phosphate + H(+). In terms of biological role, promotes mitochondrial protein synthesis. May act as a fidelity factor of the translation reaction, by catalyzing a one-codon backward translocation of tRNAs on improperly translocated ribosomes. Binds to mitochondrial ribosomes in a GTP-dependent manner. The sequence is that of Translation factor GUF1, mitochondrial from Sordaria macrospora (strain ATCC MYA-333 / DSM 997 / K(L3346) / K-hell).